Consider the following 245-residue polypeptide: 5-oxoprolinase subunit A (245 aa).

It belongs to the LamB/PxpA family. As to quaternary structure, forms a complex composed of PxpA, PxpB and PxpC.

The enzyme catalyses 5-oxo-L-proline + ATP + 2 H2O = L-glutamate + ADP + phosphate + H(+). Catalyzes the cleavage of 5-oxoproline to form L-glutamate coupled to the hydrolysis of ATP to ADP and inorganic phosphate. The sequence is that of 5-oxoprolinase subunit A from Cronobacter sakazakii (strain ATCC BAA-894) (Enterobacter sakazakii).